The following is a 330-amino-acid chain: Glycerol-3-phosphate dehydrogenase [NAD(P)+] (330 aa).

Residues tryptophan 11, arginine 31, histidine 32, and lysine 105 each contribute to the NADPH site. Lysine 105 and glycine 133 together coordinate sn-glycerol 3-phosphate. Residue alanine 137 participates in NADPH binding. Sn-glycerol 3-phosphate-binding residues include lysine 188, aspartate 241, serine 251, arginine 252, and asparagine 253. The active-site Proton acceptor is lysine 188. Arginine 252 is a binding site for NADPH. Leucine 277 and glutamate 279 together coordinate NADPH.

Belongs to the NAD-dependent glycerol-3-phosphate dehydrogenase family.

The protein localises to the cytoplasm. It carries out the reaction sn-glycerol 3-phosphate + NAD(+) = dihydroxyacetone phosphate + NADH + H(+). It catalyses the reaction sn-glycerol 3-phosphate + NADP(+) = dihydroxyacetone phosphate + NADPH + H(+). The protein operates within membrane lipid metabolism; glycerophospholipid metabolism. Functionally, catalyzes the reduction of the glycolytic intermediate dihydroxyacetone phosphate (DHAP) to sn-glycerol 3-phosphate (G3P), the key precursor for phospholipid synthesis. The polypeptide is Glycerol-3-phosphate dehydrogenase [NAD(P)+] (Orientia tsutsugamushi (strain Boryong) (Rickettsia tsutsugamushi)).